The sequence spans 698 residues: Pheromone-regulated protein PRM7 (698 aa).

Disordered regions lie at residues 1–65 (MYRT…IGNS), 133–183 (ESTT…SAVT), 197–274 (SVDQ…TVTI), and 455–480 (SASS…DSKT). 2 stretches are compositionally biased toward low complexity: residues 9 to 56 (EVTT…TTSA) and 158 to 183 (VTTS…SAVT). Over residues 455-465 (SASSSRSSATS) the composition is skewed to low complexity.

This chain is Pheromone-regulated protein PRM7 (PRM7), found in Saccharomyces cerevisiae (strain ATCC 204508 / S288c) (Baker's yeast).